The primary structure comprises 137 residues: Immunoglobulin domain-containing protein oig-1 (137 aa).

A signal peptide spans 1 to 23 (MFSELRILRDILLLCFLSVGINA). An Ig-like C2-type domain is found at 41–133 (PKISRSSYFK…KGSRVKKFLT (93 aa)). Cysteines 63 and 118 form a disulfide.

As to expression, expressed in DD and VD GABAergic motor neurons. Expressed in a subset of head neurons including M2 motor neurons in the pharynx. Expressed in coelomocytes.

The protein localises to the membrane. Its subcellular location is the secreted. The protein resides in the extracellular space. It is found in the cell projection. It localises to the dendrite. The protein localises to the axon. Its function is as follows. Plays a role in neural development, where it temporally regulates synapse formation in the D-type inhibitory GABAergic motor neurons, dorsal D (DD) and ventral D (VD) motor neurons. Controls the translocation of postsynaptic proteins, such as the acetylcholine receptor subunit acr-12, and presynaptic proteins, such as snb-1, along nerve cords to prevent premature synapse remodeling/formation. The chain is Immunoglobulin domain-containing protein oig-1 from Caenorhabditis elegans.